Here is a 345-residue protein sequence, read N- to C-terminus: Thylakoid lumenal 29 kDa protein, chloroplastic (345 aa).

Belongs to the peroxidase family.

Its subcellular location is the plastid. It is found in the chloroplast thylakoid lumen. This is Thylakoid lumenal 29 kDa protein, chloroplastic (CLEB3J9) from Solanum lycopersicum (Tomato).